The chain runs to 648 residues: Macrolide export ATP-binding/permease protein MacB 1 (648 aa).

One can recognise an ABC transporter domain in the interval 6-244 (LQLSGIRRHF…PAPTTSRADT (239 aa)). Residue 42 to 49 (GASGSGKS) participates in ATP binding. Residues 222–248 (VVADRRREPTPPSPAPTTSRADTGGRG) are disordered. 4 helical membrane passes run 273–293 (FLTM…VALG), 521–541 (LTLL…IGVM), 578–598 (LVCL…GVLF), and 613–633 (AVLM…FFPA).

Belongs to the ABC transporter superfamily. Macrolide exporter (TC 3.A.1.122) family. As to quaternary structure, homodimer. Part of the tripartite efflux system MacAB-TolC, which is composed of an inner membrane transporter, MacB, a periplasmic membrane fusion protein, MacA, and an outer membrane component, TolC. The complex forms a large protein conduit and can translocate molecules across both the inner and outer membranes. Interacts with MacA.

Its subcellular location is the cell inner membrane. Part of the tripartite efflux system MacAB-TolC. MacB is a non-canonical ABC transporter that contains transmembrane domains (TMD), which form a pore in the inner membrane, and an ATP-binding domain (NBD), which is responsible for energy generation. Confers resistance against macrolides. This Aeromonas hydrophila subsp. hydrophila (strain ATCC 7966 / DSM 30187 / BCRC 13018 / CCUG 14551 / JCM 1027 / KCTC 2358 / NCIMB 9240 / NCTC 8049) protein is Macrolide export ATP-binding/permease protein MacB 1.